The following is a 146-amino-acid chain: MIQKINILDSSQSGVKNGADSEAVLAALIEHLELINPSGRLSQNTRSAMLQLREEEWSEFFFWLLNSLECLDYVIINLTPESKKTLMSEHRNNIQVAIDALYSQRRRKSPGDESETLTRRNDAIFGNHVWQTFAQYFPPGLEKPSV.

This is an uncharacterized protein from Escherichia coli (strain K12).